The chain runs to 208 residues: Ubiquitin-conjugating enzyme E2 S (208 aa).

One can recognise a UBC core domain in the interval 14–160; it reads QTIRQVMKEL…ARMMTEIHAQ (147 aa). Cys98 acts as the Glycyl thioester intermediate in catalysis. Positions 161–196 are disordered; sequence PAKCGAGASDAKDDDGPSTKKHAGVDKKLQDKKKEK. Residues 170 to 196 show a composition bias toward basic and acidic residues; sequence DAKDDDGPSTKKHAGVDKKLQDKKKEK.

It belongs to the ubiquitin-conjugating enzyme family.

The catalysed reaction is S-ubiquitinyl-[E1 ubiquitin-activating enzyme]-L-cysteine + [E2 ubiquitin-conjugating enzyme]-L-cysteine = [E1 ubiquitin-activating enzyme]-L-cysteine + S-ubiquitinyl-[E2 ubiquitin-conjugating enzyme]-L-cysteine.. It functions in the pathway protein modification; protein ubiquitination. Functionally, catalyzes the covalent attachment of ubiquitin to other proteins. Acts as an essential factor of the anaphase promoting complex/cyclosome (APC/C), a cell cycle-regulated ubiquitin ligase that controls progression through mitosis. Acts by specifically elongating polyubiquitin chains initiated by the E2 enzyme vih/UbcH10 on APC/C substrates, enhancing the degradation of APC/C substrates by the proteasome and promoting mitotic exit. In Drosophila grimshawi (Hawaiian fruit fly), this protein is Ubiquitin-conjugating enzyme E2 S.